The chain runs to 149 residues: 3-hydroxyacyl-[acyl-carrier-protein] dehydratase FabZ (149 aa).

Residue histidine 49 is part of the active site.

The protein belongs to the thioester dehydratase family. FabZ subfamily.

It localises to the cytoplasm. The catalysed reaction is a (3R)-hydroxyacyl-[ACP] = a (2E)-enoyl-[ACP] + H2O. Its function is as follows. Involved in unsaturated fatty acids biosynthesis. Catalyzes the dehydration of short chain beta-hydroxyacyl-ACPs and long chain saturated and unsaturated beta-hydroxyacyl-ACPs. This Sulfurimonas denitrificans (strain ATCC 33889 / DSM 1251) (Thiomicrospira denitrificans (strain ATCC 33889 / DSM 1251)) protein is 3-hydroxyacyl-[acyl-carrier-protein] dehydratase FabZ.